Consider the following 92-residue polypeptide: Kinetoplastid membrane protein 11C (92 aa).

This sequence belongs to the KMP-11 family. As to quaternary structure, monomer.

It is found in the cytoplasm. The protein resides in the cytoskeleton. The protein localises to the cell projection. It localises to the cilium. Its subcellular location is the flagellum. May be involved in the regulation of the cytoskeleton through interaction with the subpellicular microtubules. May be involved in parasite mobility and attachment to the surface of the host cell. Behaves as a strong immunogen during infection. This chain is Kinetoplastid membrane protein 11C (KMP-11C), found in Leishmania infantum.